The chain runs to 499 residues: MSKHDTDTSDQHAAKRRWLNAHEEGYHKAMGNRQVQMIAIGGAIGTGLFLGAGARLQMAGPALALVYLICGLFSFFILRALGELVLHRPSSGSFVSYAREFLGEKAAYVAGWMYFINWAMTGIVDITAVALYMHYWGAFGGVPQWVFALAALTIVGTMNMIGVKWFAEMEFWFALIKVLAIVTFLVVGTVFLGSGQPLDGNTTGFHLITDNGGFFPHGLLPALVLIQGVVFAFASIEMVGTAAGECKDPQTMVPKAINSVIWRIGLFYVGSVVLLVMLLPWSAYQAGQSPFVTFFSKLGVPYIGSIMNIVVLTAALSSLNSGLYCTGRILRSMAMGGSAPSFMAKMSRQHVPYAGILATLVVYVVGVFLNYLVPSRVFEIVLNFASLGIIASWAFIIVCQMRLRKAIKEGKAADVSFKLPGAPFTSWLTLLFLLSVLVLMAFDYPNGTYTIAALPIIGILLVIGWFGVRKRVAEIHSTAPVVEEDEEKQEIVFKPETAS.

12 helical membrane passes run 34-54 (QVQM…GAGA), 58-78 (MAGP…FFIL), 109-129 (VAGW…ITAV), 146-166 (VFAL…VKWF), 171-191 (FWFA…GTVF), 219-239 (LLPA…IEMV), 264-284 (IGLF…WSAY), 298-318 (LGVP…ALSS), 353-373 (YAGI…NYLV), 378-398 (FEIV…FIIV), 422-442 (APFT…LMAF), and 448-468 (TYTI…WFGV).

The protein belongs to the amino acid-polyamine-organocation (APC) superfamily. Amino acid transporter (AAT) (TC 2.A.3.1) family.

The protein resides in the cell inner membrane. The chain is L-asparagine permease (ansP) from Escherichia coli (strain K12).